The chain runs to 210 residues: Ras-related protein Rab-2-B (210 aa).

13 to 21 (GDTGVGKSC) contacts GTP. Positions 35 to 43 (HDLTIGVEF) match the Effector region motif. Residues 61–65 (DTAGQ), 119–122 (NKCD), and 149–151 (SAK) each bind GTP. 2 S-geranylgeranyl cysteine lipidation sites follow: C208 and C209.

Belongs to the small GTPase superfamily. Rab family.

The protein resides in the endoplasmic reticulum membrane. It is found in the golgi apparatus membrane. Its function is as follows. Protein transport. Probably involved in vesicular traffic. The protein is Ras-related protein Rab-2-B (RAB2B) of Zea mays (Maize).